A 561-amino-acid polypeptide reads, in one-letter code: Lysine--tRNA ligase (561 aa).

Residues Glu-409 and Glu-416 each coordinate Mg(2+).

The protein belongs to the class-II aminoacyl-tRNA synthetase family. Homodimer. It depends on Mg(2+) as a cofactor.

Its subcellular location is the cytoplasm. The catalysed reaction is tRNA(Lys) + L-lysine + ATP = L-lysyl-tRNA(Lys) + AMP + diphosphate. This is Lysine--tRNA ligase from Nostoc punctiforme (strain ATCC 29133 / PCC 73102).